We begin with the raw amino-acid sequence, 326 residues long: Zinc finger CCCH domain-containing protein 15 (326 aa).

The span at 1 to 14 shows a compositional bias: gly residues; that stretch reads MADGGGGGEAGSGG. Residues 1–142 are disordered; it reads MADGGGGGEA…SSSGSGSGEV (142 aa). Residues 24–33 are compositionally biased toward basic residues; that stretch reads KPPKNIRKRP. Low complexity predominate over residues 47 to 64; it reads SGAIAAARAKKAPSSTSK. Residues 81 to 100 are compositionally biased toward polar residues; it reads YESSRTIQASTDSRATATLE. A compositionally biased stretch (basic and acidic residues) spans 104–125; the sequence is EFDRDARAIRERQLKQAEESLK. A C3H1-type zinc finger spans residues 187-215; it reads DYQPDICKDYKETGYCGYGDSCKFMHDRG. The RING-type zinc-finger motif lies at 265–303; that stretch reads CYICREPFVDPVVTKCKHYFCEHCALKHHSKNKKCFVCN.

The protein is Zinc finger CCCH domain-containing protein 15 of Oryza sativa subsp. japonica (Rice).